Reading from the N-terminus, the 412-residue chain is Multifunctional CCA protein (412 aa).

ATP contacts are provided by Gly-8 and Arg-11. CTP-binding residues include Gly-8 and Arg-11. The Mg(2+) site is built by Asp-21 and Asp-23. Residues Arg-91, Arg-137, and Arg-140 each contribute to the ATP site. The CTP site is built by Arg-91, Arg-137, and Arg-140. Residues 228–329 (TGIHTLMTLS…VKLFDSIDAW (102 aa)) form the HD domain.

The protein belongs to the tRNA nucleotidyltransferase/poly(A) polymerase family. Bacterial CCA-adding enzyme type 1 subfamily. In terms of assembly, monomer. Can also form homodimers and oligomers. Mg(2+) is required as a cofactor. The cofactor is Ni(2+).

It carries out the reaction a tRNA precursor + 2 CTP + ATP = a tRNA with a 3' CCA end + 3 diphosphate. It catalyses the reaction a tRNA with a 3' CCA end + 2 CTP + ATP = a tRNA with a 3' CCACCA end + 3 diphosphate. Functionally, catalyzes the addition and repair of the essential 3'-terminal CCA sequence in tRNAs without using a nucleic acid template. Adds these three nucleotides in the order of C, C, and A to the tRNA nucleotide-73, using CTP and ATP as substrates and producing inorganic pyrophosphate. tRNA 3'-terminal CCA addition is required both for tRNA processing and repair. Also involved in tRNA surveillance by mediating tandem CCA addition to generate a CCACCA at the 3' terminus of unstable tRNAs. While stable tRNAs receive only 3'-terminal CCA, unstable tRNAs are marked with CCACCA and rapidly degraded. The sequence is that of Multifunctional CCA protein from Escherichia coli O139:H28 (strain E24377A / ETEC).